A 223-amino-acid chain; its full sequence is uncharacterized protein (223 aa).

This is an uncharacterized protein from Mycoplasma pneumoniae (strain ATCC 29342 / M129 / Subtype 1) (Mycoplasmoides pneumoniae).